The sequence spans 384 residues: Zinc finger protein GLIS2 homolog (384 aa).

The C2H2-type 1 zinc-finger motif lies at 128–153; sequence FVCNWTDCDRVFDTLDALAQHVTQRH. A C2H2-type 2; degenerate zinc finger spans residues 163-190; it reads YYCRWRGCQRSERGFNARYKMLVHTRTH. C2H2-type zinc fingers lie at residues 196–218, 224–248, and 254–280; these read HRCHLCEKSFSRAENLKIHIRSH, YKCSFEGCQKAYSNSSDRFKHTRTH, and YMCKVAGCQKRYTDPSSLRKHVKTFKH. The disordered stretch occupies residues 321 to 343; the sequence is SSSSARYYDDSNNEPSDYSLKPK.

It belongs to the GLI C2H2-type zinc-finger protein family.

It is found in the nucleus. Its function is as follows. Transcription factor which represses a set of lipase genes involved in fat catabolism. The chain is Zinc finger protein GLIS2 homolog (sug) from Drosophila melanogaster (Fruit fly).